Here is a 547-residue protein sequence, read N- to C-terminus: CTP synthase (547 aa).

Positions 1-267 (MTKFVFVTGG…AQQTLALLNL (267 aa)) are amidoligase domain. Ser-13 is a binding site for CTP. Residue Ser-13 coordinates UTP. Residues 14 to 19 (SIGKGI) and Asp-71 each bind ATP. Residues Asp-71 and Glu-141 each coordinate Mg(2+). CTP is bound by residues 148 to 150 (DIE), 188 to 193 (KTKPTQ), and Lys-224. UTP-binding positions include 188 to 193 (KTKPTQ) and Lys-224. Residues 292–534 (EIALVGKYVQ…VKAAVDHYST (243 aa)) enclose the Glutamine amidotransferase type-1 domain. Residue Gly-354 participates in L-glutamine binding. The active-site Nucleophile; for glutamine hydrolysis is the Cys-381. Residues 382 to 385 (LGMQ), Glu-405, and Arg-462 contribute to the L-glutamine site. Catalysis depends on residues His-507 and Glu-509.

The protein belongs to the CTP synthase family. As to quaternary structure, homotetramer.

It catalyses the reaction UTP + L-glutamine + ATP + H2O = CTP + L-glutamate + ADP + phosphate + 2 H(+). The enzyme catalyses L-glutamine + H2O = L-glutamate + NH4(+). The catalysed reaction is UTP + NH4(+) + ATP = CTP + ADP + phosphate + 2 H(+). It functions in the pathway pyrimidine metabolism; CTP biosynthesis via de novo pathway; CTP from UDP: step 2/2. Allosterically activated by GTP, when glutamine is the substrate; GTP has no effect on the reaction when ammonia is the substrate. The allosteric effector GTP functions by stabilizing the protein conformation that binds the tetrahedral intermediate(s) formed during glutamine hydrolysis. Inhibited by the product CTP, via allosteric rather than competitive inhibition. Catalyzes the ATP-dependent amination of UTP to CTP with either L-glutamine or ammonia as the source of nitrogen. Regulates intracellular CTP levels through interactions with the four ribonucleotide triphosphates. This Rippkaea orientalis (strain PCC 8801 / RF-1) (Cyanothece sp. (strain PCC 8801)) protein is CTP synthase.